We begin with the raw amino-acid sequence, 414 residues long: UDP-N-acetylmuramoylalanine--D-glutamate ligase (414 aa).

104–110 (GSNGKST) contributes to the ATP binding site.

Belongs to the MurCDEF family.

Its subcellular location is the cytoplasm. It carries out the reaction UDP-N-acetyl-alpha-D-muramoyl-L-alanine + D-glutamate + ATP = UDP-N-acetyl-alpha-D-muramoyl-L-alanyl-D-glutamate + ADP + phosphate + H(+). Its pathway is cell wall biogenesis; peptidoglycan biosynthesis. Functionally, cell wall formation. Catalyzes the addition of glutamate to the nucleotide precursor UDP-N-acetylmuramoyl-L-alanine (UMA). The chain is UDP-N-acetylmuramoylalanine--D-glutamate ligase from Francisella philomiragia subsp. philomiragia (strain ATCC 25017 / CCUG 19701 / FSC 153 / O#319-036).